The chain runs to 137 residues: Phosphoribosyl-AMP cyclohydrolase (137 aa).

Mg(2+) is bound at residue aspartate 84. A Zn(2+)-binding site is contributed by cysteine 85. Mg(2+) is bound by residues aspartate 86 and aspartate 88. Cysteine 101 and cysteine 108 together coordinate Zn(2+).

It belongs to the PRA-CH family. In terms of assembly, homodimer. Mg(2+) is required as a cofactor. The cofactor is Zn(2+).

Its subcellular location is the cytoplasm. It carries out the reaction 1-(5-phospho-beta-D-ribosyl)-5'-AMP + H2O = 1-(5-phospho-beta-D-ribosyl)-5-[(5-phospho-beta-D-ribosylamino)methylideneamino]imidazole-4-carboxamide. Its pathway is amino-acid biosynthesis; L-histidine biosynthesis; L-histidine from 5-phospho-alpha-D-ribose 1-diphosphate: step 3/9. Functionally, catalyzes the hydrolysis of the adenine ring of phosphoribosyl-AMP. This is Phosphoribosyl-AMP cyclohydrolase from Prosthecochloris aestuarii (strain DSM 271 / SK 413).